Reading from the N-terminus, the 237-residue chain is 2-C-methyl-D-erythritol 4-phosphate cytidylyltransferase (237 aa).

This sequence belongs to the IspD/TarI cytidylyltransferase family. IspD subfamily. As to quaternary structure, homodimer.

It carries out the reaction 2-C-methyl-D-erythritol 4-phosphate + CTP + H(+) = 4-CDP-2-C-methyl-D-erythritol + diphosphate. It participates in isoprenoid biosynthesis; isopentenyl diphosphate biosynthesis via DXP pathway; isopentenyl diphosphate from 1-deoxy-D-xylulose 5-phosphate: step 2/6. In terms of biological role, catalyzes the formation of 4-diphosphocytidyl-2-C-methyl-D-erythritol from CTP and 2-C-methyl-D-erythritol 4-phosphate (MEP). The protein is 2-C-methyl-D-erythritol 4-phosphate cytidylyltransferase of Pectobacterium atrosepticum (strain SCRI 1043 / ATCC BAA-672) (Erwinia carotovora subsp. atroseptica).